The chain runs to 197 residues: Penicillin-binding protein activator LpoB (197 aa).

The N-terminal stretch at 1 to 17 is a signal peptide; the sequence is MIKRMSGIALAALLLSG. Cysteine 18 carries N-palmitoyl cysteine lipidation. Cysteine 18 is lipidated: S-diacylglycerol cysteine. Residues 23–57 form a disordered region; sequence PRGETPSQPPAPTTPAKPSVVPTPTPPVVTPVPQP. Over residues 29–57 the composition is skewed to pro residues; the sequence is SQPPAPTTPAKPSVVPTPTPPVVTPVPQP.

This sequence belongs to the LpoB family. Interacts with PBP1b.

Its subcellular location is the cell outer membrane. Regulator of peptidoglycan synthesis that is essential for the function of penicillin-binding protein 1B (PBP1b). This is Penicillin-binding protein activator LpoB from Edwardsiella piscicida.